Here is a 1058-residue protein sequence, read N- to C-terminus: Ubiquitin-like modifier-activating enzyme 1 (1058 aa).

A disordered region spans residues 1–46 (MSSSPLSKKRRVSGPDPKPGSNCSSAQSVLSEVSSVPTNGMAKNGS). An N-acetylserine modification is found at Ser2. A phosphoserine mark is found at Ser4, Ser13, Ser21, Ser24, and Ser46. Residues 24-36 (SSAQSVLSEVSSV) show a composition bias toward low complexity. A Phosphotyrosine modification is found at Tyr55. 2 consecutive repeat copies span residues 63–199 (GHEA…GQLF) and 459–611 (GSDL…QVVI). Residues 63–611 (GHEAMKMLQT…GTKGNVQVVI (549 aa)) form a 2 approximate repeats region. ATP-binding positions include Ala478, Asp504, Arg515, Lys528, and 576-577 (DN). Lys528 carries the post-translational modification N6-succinyllysine. The active-site Glycyl thioester intermediate is Cys632. Position 671 is an N6-acetyllysine (Lys671). Position 800 is a phosphothreonine (Thr800). Ser810, Ser816, Ser820, and Ser835 each carry phosphoserine. At Lys980 the chain carries N6-acetyllysine.

The protein belongs to the ubiquitin-activating E1 family. As to quaternary structure, monomer. Interacts with GAN (via BTB domain). ISGylated.

The protein resides in the cytoplasm. The protein localises to the mitochondrion. It is found in the nucleus. The enzyme catalyses ATP + ubiquitin + [E1 ubiquitin-activating enzyme]-L-cysteine = AMP + diphosphate + S-ubiquitinyl-[E1 ubiquitin-activating enzyme]-L-cysteine.. It participates in protein modification; protein ubiquitination. Functionally, catalyzes the first step in ubiquitin conjugation to mark cellular proteins for degradation through the ubiquitin-proteasome system. Activates ubiquitin by first adenylating its C-terminal glycine residue with ATP, and thereafter linking this residue to the side chain of a cysteine residue in E1, yielding a ubiquitin-E1 thioester and free AMP. Essential for the formation of radiation-induced foci, timely DNA repair and for response to replication stress. Promotes the recruitment of TP53BP1 and BRCA1 at DNA damage sites. This chain is Ubiquitin-like modifier-activating enzyme 1, found in Rattus norvegicus (Rat).